The following is a 610-amino-acid chain: Atypical kinase COQ8, mitochondrial (610 aa).

Over residues 98-111 (GVKHLQEQSSKEIK) the composition is skewed to basic and acidic residues. Residues 98–144 (GVKHLQEQSSKEIKNPISQPILPNKKDEISPAKPSAIDSSIKDVTKS) form a disordered region.

The protein belongs to the protein kinase superfamily. ADCK protein kinase family.

The protein resides in the mitochondrion. It participates in cofactor biosynthesis; ubiquinone biosynthesis. In terms of biological role, atypical kinase involved in the biosynthesis of coenzyme Q, also named ubiquinone, an essential lipid-soluble electron transporter for aerobic cellular respiration. Its substrate specificity is still unclear: may act as a protein kinase that mediates phosphorylation of coq3. According to other reports, acts as a small molecule kinase, possibly a lipid kinase that phosphorylates a prenyl lipid in the ubiquinone biosynthesis pathway, as suggested by its ability to bind coenzyme Q lipid intermediates. The polypeptide is Atypical kinase COQ8, mitochondrial (Schizosaccharomyces pombe (strain 972 / ATCC 24843) (Fission yeast)).